Here is a 227-residue protein sequence, read N- to C-terminus: Prolactin-4A1 (227 aa).

The first 31 residues, 1-31, serve as a signal peptide directing secretion; that stretch reads MHLSLTPQWSSWTVLLLLVSNLLLWENTASA. 2 disulfide bridges follow: Cys87–Cys203 and Cys220–Cys227. N-linked (GlcNAc...) asparagine glycosylation is present at Asn175.

This sequence belongs to the somatotropin/prolactin family. In terms of tissue distribution, expressed specifically in placenta. Expressed in both trophoblast giant cells and spongiotrophoblast cells.

The protein resides in the secreted. This chain is Prolactin-4A1 (Prl4a1), found in Mus musculus (Mouse).